The sequence spans 236 residues: DNA repair protein RecO (236 aa).

Belongs to the RecO family.

Functionally, involved in DNA repair and RecF pathway recombination. The polypeptide is DNA repair protein RecO (Rickettsia typhi (strain ATCC VR-144 / Wilmington)).